A 91-amino-acid chain; its full sequence is Small ribosomal subunit protein uS19 (91 aa).

This sequence belongs to the universal ribosomal protein uS19 family.

In terms of biological role, protein S19 forms a complex with S13 that binds strongly to the 16S ribosomal RNA. In Synechococcus sp. (strain CC9902), this protein is Small ribosomal subunit protein uS19.